The primary structure comprises 796 residues: Protein translocase subunit SecA 2 (796 aa).

ATP contacts are provided by residues Gln-84, 102 to 106, and Asp-496; that span reads GEGKT.

Belongs to the SecA family. As to quaternary structure, monomer and homodimer (Potential). Part of the accessory SecA2/SecY2 protein translocation apparatus required to export cell wall protein SraP.

It is found in the cell membrane. Its subcellular location is the cytoplasm. The catalysed reaction is ATP + H2O + cellular proteinSide 1 = ADP + phosphate + cellular proteinSide 2.. In terms of biological role, part of the accessory SecA2/SecY2 system specifically required to export SraP, a serine-rich repeat cell wall protein encoded upstream in the same operon. This is Protein translocase subunit SecA 2 from Staphylococcus aureus (strain NCTC 8325 / PS 47).